A 276-amino-acid polypeptide reads, in one-letter code: ESX-2 secretion-associated protein EspG2 (276 aa).

Belongs to the EspG family. As to quaternary structure, interacts specifically with ESX-2-dependent PE/PPE proteins.

The protein localises to the cytoplasm. Specific chaperone for cognate PE/PPE proteins. Plays an important role in preventing aggregation of PE/PPE dimers. The protein is ESX-2 secretion-associated protein EspG2 of Mycobacterium tuberculosis (strain CDC 1551 / Oshkosh).